The chain runs to 317 residues: Beta-ketoacyl-[acyl-carrier-protein] synthase III (317 aa).

Residues cysteine 112 and histidine 244 contribute to the active site. The ACP-binding stretch occupies residues 245-249; that stretch reads QANLR. Residue asparagine 274 is part of the active site.

Belongs to the thiolase-like superfamily. FabH family. Homodimer.

It localises to the cytoplasm. It catalyses the reaction malonyl-[ACP] + acetyl-CoA + H(+) = 3-oxobutanoyl-[ACP] + CO2 + CoA. It participates in lipid metabolism; fatty acid biosynthesis. Catalyzes the condensation reaction of fatty acid synthesis by the addition to an acyl acceptor of two carbons from malonyl-ACP. Catalyzes the first condensation reaction which initiates fatty acid synthesis and may therefore play a role in governing the total rate of fatty acid production. Possesses both acetoacetyl-ACP synthase and acetyl transacylase activities. Its substrate specificity determines the biosynthesis of branched-chain and/or straight-chain of fatty acids. The protein is Beta-ketoacyl-[acyl-carrier-protein] synthase III of Pasteurella multocida (strain Pm70).